The chain runs to 322 residues: AB hydrolase superfamily protein FGSG_00044 (322 aa).

In terms of domain architecture, AB hydrolase-1 spans 36–319; the sequence is RTTPKQPVAI…ITAEVRRIVK (284 aa).

This sequence belongs to the AB hydrolase superfamily.

It participates in mycotoxin biosynthesis. Functionally, AB hydrolase superfamily protein; part of the gene cluster that mediates the biosynthesis of gramillins A and B, bicyclic lipopeptides that induce cell death in maize leaves but not in wheat leaves. The nonribosomal peptide synthetase GRA1 incorporates respectively a glutamic adic (Glu), a leucine (Leu), a serine (Ser), a hydroxyglutamine (HOGln), a 2-amino decanoic acid, and 2 cysteins (CysB and CysA). The biosynthesis of 2-amino decanoic acid incorporated in gramillins could be initiated by a fatty acid synthase composed of the alpha and beta subunits FGSG_00036 and FGSG_11656. The cytochrome P450 monooxygenase FGSG_15680 could hydroxylate the fatty acid chain. Subsequent oxidation to the ketone by the oxidoreductase FGSG_00048 and transamination by aminotransferase FGSG_00049 could form 2-amino-decanoic acid. On the other hand, FGSG_15680 could also be responsible for the HO-modified glutamine at the gamma-position. Whether hydroxylation occurs on the fully assembled product or on the Gln residue prior to assembly into the gramillins requires further proof. The thioredoxin FGSG_00043 could also be required for the disulfide-bond formation between CysA and CysB. The specific involvement of the remaining proteins from the cluster is more difficult to discern, but could have broader regulatory (FGSG_00040 and FGSG_11657) or enzymatic functions (FGSG_00044 and FGSG_00045). The final C-domain of GRA1 does not possess the expected sequence of a termination CT domain, often implicated in macrocyclization and release of a cyclopeptidein fungal NRPs; and the thioesterase FGSG_00047 may act in concert with the terminal C-domain of GRA1 to catalyze the formation of the macrocyclic anhydride and release of the products. This chain is AB hydrolase superfamily protein FGSG_00044, found in Gibberella zeae (strain ATCC MYA-4620 / CBS 123657 / FGSC 9075 / NRRL 31084 / PH-1) (Wheat head blight fungus).